A 255-amino-acid chain; its full sequence is Imidazole glycerol phosphate synthase subunit HisF (255 aa).

Residues Asp11 and Asp130 contribute to the active site.

This sequence belongs to the HisA/HisF family. As to quaternary structure, heterodimer of HisH and HisF.

It localises to the cytoplasm. The enzyme catalyses 5-[(5-phospho-1-deoxy-D-ribulos-1-ylimino)methylamino]-1-(5-phospho-beta-D-ribosyl)imidazole-4-carboxamide + L-glutamine = D-erythro-1-(imidazol-4-yl)glycerol 3-phosphate + 5-amino-1-(5-phospho-beta-D-ribosyl)imidazole-4-carboxamide + L-glutamate + H(+). It functions in the pathway amino-acid biosynthesis; L-histidine biosynthesis; L-histidine from 5-phospho-alpha-D-ribose 1-diphosphate: step 5/9. In terms of biological role, IGPS catalyzes the conversion of PRFAR and glutamine to IGP, AICAR and glutamate. The HisF subunit catalyzes the cyclization activity that produces IGP and AICAR from PRFAR using the ammonia provided by the HisH subunit. The protein is Imidazole glycerol phosphate synthase subunit HisF of Syntrophotalea carbinolica (strain DSM 2380 / NBRC 103641 / GraBd1) (Pelobacter carbinolicus).